Consider the following 278-residue polypeptide: Tryptophan synthase alpha chain (278 aa).

Catalysis depends on proton acceptor residues Glu50 and Asp61.

The protein belongs to the TrpA family. As to quaternary structure, tetramer of two alpha and two beta chains.

The catalysed reaction is (1S,2R)-1-C-(indol-3-yl)glycerol 3-phosphate + L-serine = D-glyceraldehyde 3-phosphate + L-tryptophan + H2O. It participates in amino-acid biosynthesis; L-tryptophan biosynthesis; L-tryptophan from chorismate: step 5/5. The alpha subunit is responsible for the aldol cleavage of indoleglycerol phosphate to indole and glyceraldehyde 3-phosphate. This Afipia carboxidovorans (strain ATCC 49405 / DSM 1227 / KCTC 32145 / OM5) (Oligotropha carboxidovorans) protein is Tryptophan synthase alpha chain.